Consider the following 620-residue polypeptide: Acetylcholinesterase 1 (620 aa).

Positions 1 to 31 (MRNSLLFFIFLPSTILAVDLIHLHDGSPLFG) are cleaved as a signal peptide. Asparagine 74 is a glycosylation site (N-linked (GlcNAc...) asparagine). Residues cysteine 82 and cysteine 109 are joined by a disulfide bond. Serine 216 (acyl-ester intermediate) is an active-site residue. A disulfide bond links cysteine 270 and cysteine 286. N-linked (GlcNAc...) asparagine glycosylation is present at asparagine 272. Catalysis depends on charge relay system residues glutamate 346 and histidine 468. Cysteines 430 and 558 form a disulfide. N-linked (GlcNAc...) asparagine glycosylation is found at asparagine 486 and asparagine 536.

The protein belongs to the type-B carboxylesterase/lipase family. As to quaternary structure, oligomer composed of disulfide-linked homodimers.

The protein resides in the synapse. It is found in the secreted. Its subcellular location is the cell membrane. It carries out the reaction acetylcholine + H2O = choline + acetate + H(+). Functionally, rapidly hydrolyzes acetylcholine and releases choline into the synapse. It can hydrolyze propionylcholine and butyrylthiocholine in vitro. In Caenorhabditis elegans, this protein is Acetylcholinesterase 1 (ace-1).